The following is a 409-amino-acid chain: Ribose-phosphate pyrophosphokinase 1 (409 aa).

The Mg(2+) site is built by aspartate 128, histidine 130, and aspartate 143. Position 199 is a phosphoserine (serine 199).

It belongs to the ribose-phosphate pyrophosphokinase family.

The protein resides in the cytoplasm. It carries out the reaction D-ribose 5-phosphate + ATP = 5-phospho-alpha-D-ribose 1-diphosphate + AMP + H(+). Its pathway is metabolic intermediate biosynthesis; 5-phospho-alpha-D-ribose 1-diphosphate biosynthesis; 5-phospho-alpha-D-ribose 1-diphosphate from D-ribose 5-phosphate (route I): step 1/1. In terms of biological role, 5-phosphoribose 1-diphosphate synthase involved in nucleotide, histidine, and tryptophan biosynthesis. Active in heteromultimeric complexes with other 5-phosphoribose 1-diphosphate synthases. This Schizosaccharomyces pombe (strain 972 / ATCC 24843) (Fission yeast) protein is Ribose-phosphate pyrophosphokinase 1.